We begin with the raw amino-acid sequence, 311 residues long: Linearmycin resistance ATP-binding protein LnrL (311 aa).

The ABC transporter domain occupies 2-232 (LQAENIKKAY…LGGDTIIQLT (231 aa)). Residue 34–41 (GPNGAGKS) participates in ATP binding.

The protein belongs to the ABC transporter superfamily. In terms of assembly, the complex is composed of two ATP-binding proteins (LnrL) and two transmembrane proteins (LnrM and LnrN).

Its function is as follows. Required for resistance to linearmycins, a family of antibiotic-specialized metabolites produced by some streptomycetes. Part of the ABC transporter complex LnrLMN that probably facilitates linearmycin removal from the membrane. Responsible for energy coupling to the transport system. Also mediates KinC-dependent biofilm morphology. The chain is Linearmycin resistance ATP-binding protein LnrL from Bacillus subtilis (strain 168).